The chain runs to 283 residues: SNF1-related protein kinase regulatory subunit beta-1 (283 aa).

The segment covering methionine 1–aspartate 10 has biased composition (basic and acidic residues). Residues methionine 1–phenylalanine 63 are disordered. Glycine 2 carries the N-myristoyl glycine lipid modification. The span at serine 43 to proline 60 shows a compositional bias: low complexity. The interval proline 101–valine 178 is kinase-interacting sequence (KIS). The interval glutamate 215–arginine 283 is association with SNF1 complex (ASC).

It belongs to the 5'-AMP-activated protein kinase beta subunit family. Subunit of a probable heterotrimeric complex consisting of an alpha catalytic (KIN10 or KIN11) subunit, and a beta (KINB) and a gamma (KING or SNF4) non-catalytic regulatory subunits. Interacts with SNF4 and CBL1. Interacts with FLZ1, FLZ2, FLZ8, FLZ9, FLZ10, FLZ12, FLZ13, FLZ14 and FLZ15. Post-translationally, sumoylated by SIZ1. In terms of tissue distribution, expressed in vegetative organs and, to lower extent, in reproductive organs.

The protein localises to the cell membrane. Its function is as follows. Regulatory subunit of the probable trimeric SNF1-related protein kinase (SnRK) complex, which may play a role in a signal transduction cascade regulating gene expression and carbohydrate metabolism in higher plants. The SnRK complex may also be involved in the regulation of fatty acid synthesis by phosphorylation of acetyl-CoA carboxylase and in assimilation of nitrogen by phosphorylating nitrate reductase. This is SNF1-related protein kinase regulatory subunit beta-1 (KINB1) from Arabidopsis thaliana (Mouse-ear cress).